The chain runs to 230 residues: Leucyl/phenylalanyl-tRNA--protein transferase (230 aa).

Belongs to the L/F-transferase family.

It is found in the cytoplasm. It catalyses the reaction N-terminal L-lysyl-[protein] + L-leucyl-tRNA(Leu) = N-terminal L-leucyl-L-lysyl-[protein] + tRNA(Leu) + H(+). It carries out the reaction N-terminal L-arginyl-[protein] + L-leucyl-tRNA(Leu) = N-terminal L-leucyl-L-arginyl-[protein] + tRNA(Leu) + H(+). The enzyme catalyses L-phenylalanyl-tRNA(Phe) + an N-terminal L-alpha-aminoacyl-[protein] = an N-terminal L-phenylalanyl-L-alpha-aminoacyl-[protein] + tRNA(Phe). Functionally, functions in the N-end rule pathway of protein degradation where it conjugates Leu, Phe and, less efficiently, Met from aminoacyl-tRNAs to the N-termini of proteins containing an N-terminal arginine or lysine. The sequence is that of Leucyl/phenylalanyl-tRNA--protein transferase from Proteus mirabilis (strain HI4320).